A 338-amino-acid polypeptide reads, in one-letter code: MSSLRLLISDSYDPWFNLAVEECIFRQMPATQRVLFLWRNADTVVIGRAQNPWKECNTRRMEEDNVRLARRSSGGGAVFHDLGNTCFTFMAGKPEYDKSVSTAIVINALAQLGIPASASGRNDLVVETAEGPRKISGSAYRETMDRGFHHGTLLLNADLSRLSNYLNPDKKKLQAKGITSVRGRVANIHDLKPGVTHAQICEAVTEAFFAYYGERVAAEVISPDAFPDLPGFAETFARQSSWEWNFGQAPAFTHQLDERFVWGGVELHFDVEKGHITRTQLFTDSLNPAPLEALASRLQGCVYQASALQGVCEALVSEFPAQAAELREVGAWMAQAVR.

A BPL/LPL catalytic domain is found at 29–216; it reads PATQRVLFLW…AFFAYYGERV (188 aa). Residues Arg-71, 76-79, and Lys-134 each bind ATP; that span reads GAVF. Lys-134 contributes to the (R)-lipoate binding site.

The protein belongs to the LplA family. Monomer.

The protein resides in the cytoplasm. The enzyme catalyses L-lysyl-[lipoyl-carrier protein] + (R)-lipoate + ATP = N(6)-[(R)-lipoyl]-L-lysyl-[lipoyl-carrier protein] + AMP + diphosphate + H(+). It participates in protein modification; protein lipoylation via exogenous pathway; protein N(6)-(lipoyl)lysine from lipoate: step 1/2. The protein operates within protein modification; protein lipoylation via exogenous pathway; protein N(6)-(lipoyl)lysine from lipoate: step 2/2. Functionally, catalyzes both the ATP-dependent activation of exogenously supplied lipoate to lipoyl-AMP and the transfer of the activated lipoyl onto the lipoyl domains of lipoate-dependent enzymes. The polypeptide is Lipoate-protein ligase A (Cronobacter sakazakii (strain ATCC BAA-894) (Enterobacter sakazakii)).